The following is a 132-amino-acid chain: Phosphoribosyl-AMP cyclohydrolase (132 aa).

Residue aspartate 86 coordinates Mg(2+). A Zn(2+)-binding site is contributed by cysteine 87. Positions 88 and 90 each coordinate Mg(2+). Zn(2+) is bound by residues cysteine 103 and cysteine 110.

It belongs to the PRA-CH family. As to quaternary structure, homodimer. Requires Mg(2+) as cofactor. Zn(2+) serves as cofactor.

It is found in the cytoplasm. It carries out the reaction 1-(5-phospho-beta-D-ribosyl)-5'-AMP + H2O = 1-(5-phospho-beta-D-ribosyl)-5-[(5-phospho-beta-D-ribosylamino)methylideneamino]imidazole-4-carboxamide. It functions in the pathway amino-acid biosynthesis; L-histidine biosynthesis; L-histidine from 5-phospho-alpha-D-ribose 1-diphosphate: step 3/9. Catalyzes the hydrolysis of the adenine ring of phosphoribosyl-AMP. This chain is Phosphoribosyl-AMP cyclohydrolase, found in Clavibacter michiganensis subsp. michiganensis (strain NCPPB 382).